A 485-amino-acid polypeptide reads, in one-letter code: WD repeat-containing protein 13 (485 aa).

Phosphoserine is present on residues serine 70, serine 74, and serine 79. Asymmetric dimethylarginine; alternate is present on arginine 114. Position 114 is an omega-N-methylarginine; alternate (arginine 114). WD repeat units follow at residues 170 to 210 (HVDE…PTVL), 215 to 254 (GHTRGVSDFAWSLSNDILVSTSLDATMRIWASEDGRCIRE), 302 to 341 (KLTGRVLALSFDAPGRLLWAGDDRGSVFSFLFDMATGKLT), 406 to 446 (HPVR…KAAV), and 451 to 484 (GHSAPVLDVSFNCDESLLASSDASGMVIVWRREQ).

The protein resides in the nucleus. This is WD repeat-containing protein 13 (WDR13) from Pongo abelii (Sumatran orangutan).